A 171-amino-acid chain; its full sequence is uncharacterized protein (171 aa).

Disordered regions lie at residues 1–41 (MDAV…SKPK) and 114–147 (DSLG…RPKR). Low complexity predominate over residues 27–38 (AQQQQGPSAQGS). Residues 116-125 (LGNTASSSSM) are compositionally biased toward polar residues.

This is an uncharacterized protein from Mus musculus (Mouse).